The chain runs to 466 residues: Ribulose bisphosphate carboxylase large chain (466 aa).

At Lys-5 the chain carries N6,N6,N6-trimethyllysine. Asn-114 and Thr-164 together coordinate substrate. The active-site Proton acceptor is Lys-166. A substrate-binding site is contributed by Lys-168. Residues Lys-192, Asp-194, and Glu-195 each contribute to the Mg(2+) site. N6-carboxylysine is present on Lys-192. The Proton acceptor role is filled by His-285. Positions 286, 318, and 370 each coordinate substrate.

The protein belongs to the RuBisCO large chain family. Type I subfamily. As to quaternary structure, heterohexadecamer of 8 large chains and 8 small chains; disulfide-linked. The disulfide link is formed within the large subunit homodimers. Mg(2+) serves as cofactor. In terms of processing, the disulfide bond which can form in the large chain dimeric partners within the hexadecamer appears to be associated with oxidative stress and protein turnover.

The protein localises to the plastid. Its subcellular location is the chloroplast. The enzyme catalyses 2 (2R)-3-phosphoglycerate + 2 H(+) = D-ribulose 1,5-bisphosphate + CO2 + H2O. It catalyses the reaction D-ribulose 1,5-bisphosphate + O2 = 2-phosphoglycolate + (2R)-3-phosphoglycerate + 2 H(+). RuBisCO catalyzes two reactions: the carboxylation of D-ribulose 1,5-bisphosphate, the primary event in carbon dioxide fixation, as well as the oxidative fragmentation of the pentose substrate in the photorespiration process. Both reactions occur simultaneously and in competition at the same active site. This Tropaeolum majus (Common nasturtium) protein is Ribulose bisphosphate carboxylase large chain.